The primary structure comprises 260 residues: uncharacterized protein (260 aa).

The signal sequence occupies residues 1 to 22 (MGYIKRIGLYISIFILIVMVAG). Cys23 carries the N-palmitoyl cysteine lipid modification. Cys23 carries the S-diacylglycerol cysteine lipid modification.

This sequence belongs to the staphylococcal tandem lipoprotein family.

Its subcellular location is the cell membrane. This is an uncharacterized protein from Staphylococcus aureus (strain bovine RF122 / ET3-1).